Here is a 238-residue protein sequence, read N- to C-terminus: tRNA (guanine-N(7)-)-methyltransferase (238 aa).

S-adenosyl-L-methionine is bound by residues Glu68, Glu93, Asp120, and Asp143. Residue Asp143 is part of the active site. Substrate is bound by residues Lys147, Asp179, and 216–219 (TKFE).

Belongs to the class I-like SAM-binding methyltransferase superfamily. TrmB family.

The catalysed reaction is guanosine(46) in tRNA + S-adenosyl-L-methionine = N(7)-methylguanosine(46) in tRNA + S-adenosyl-L-homocysteine. The protein operates within tRNA modification; N(7)-methylguanine-tRNA biosynthesis. Its function is as follows. Catalyzes the formation of N(7)-methylguanine at position 46 (m7G46) in tRNA. The polypeptide is tRNA (guanine-N(7)-)-methyltransferase (Shewanella putrefaciens (strain CN-32 / ATCC BAA-453)).